Here is a 1321-residue protein sequence, read N- to C-terminus: Bile salt export pump (1321 aa).

Over 1–62 (MSDSVILRSV…FSSWTDIWLM (62 aa)) the chain is Cytoplasmic. In terms of domain architecture, ABC transmembrane type-1 1 spans 62–385 (MCMGSLCACI…ASPCLEAFAA (324 aa)). A helical membrane pass occupies residues 63-83 (CMGSLCACIHGIAQPGVLLIF). At 84 to 147 (GTMTDVFIDY…MIRFAGYYAG (64 aa)) the chain is on the extracellular side. N109, N116, N122, and N125 each carry an N-linked (GlcNAc...) asparagine glycan. A helical membrane pass occupies residues 148 to 168 (IGIAVLTTGYIQICFWGIAAA). Residues 169 to 215 (HQIQKMRKSYFRKIMRMGIGWVDCNSVGKLNTPFSVDFNKINDSSAD) are Cytoplasmic-facing. Residues 216-236 (QLAIFIQGMTSPIFGFLVGFS) traverse the membrane as a helical segment. At 237–240 (QWWK) the chain is on the extracellular side. Residues 241–261 (LTLVIISVSPLIGLGAAIIGL) form a helical membrane-spanning segment. Over 262–319 (SVSKFTDYELKAYAKAGSVADEVISSMRTVAAFGGEKKEVERYEKNLVFAQRWGIRKG) the chain is Cytoplasmic. A helical membrane pass occupies residues 320 to 340 (IVMGFFTGYMWCLIFFCYALA). Over 341–353 (FWYGSKLVLEEGE) the chain is Extracellular. The helical transmembrane segment at 354–374 (YSPGALVQIFLSVIIGALNLG) threads the bilayer. Residues 375–755 (NASPCLEAFA…KLNAPEWPYM (381 aa)) are Cytoplasmic-facing. Residues 420-656 (IEFHNVTFHY…KGVYFALVTL (237 aa)) enclose the ABC transporter 1 domain. An ATP-binding site is contributed by 455–462 (GPSGAGKS). A Phosphothreonine modification is found at T586. Phosphoserine is present on S587. An interaction with HAX1 region spans residues 651–672 (FALVTLQSQRNQGDQEENEKDA). A disordered region spans residues 659-735 (QRNQGDQEEN…KDKDLPAQED (77 aa)). Positions 664 to 677 (DQEENEKDATEDDI) are enriched in acidic residues. Phosphoserine occurs at positions 690, 701, and 704. Positions 714–731 (VEDHKSTHEEDRKDKDLP) are enriched in basic and acidic residues. The ABC transmembrane type-1 2 domain maps to 755–1043 (MLLGSMGAAV…ASSYTPSYAK (289 aa)). Residues 756–776 (LLGSMGAAVNGAVTPLYAFLF) form a helical membrane-spanning segment. Over 777-794 (SQILGTFSLPDKEEQRSQ) the chain is Extracellular. A helical membrane pass occupies residues 795 to 815 (INGICLLFVTLGCVSFFTQFL). At 816 to 869 (QGYTFAKSGELLTKRLRKFGFRAMLGQDIGWFDDLRNSPGALTTRLATDASQVQ) the chain is on the cytoplasmic side. 2 consecutive transmembrane segments (helical) span residues 870-890 (GATG…TVAM) and 891-911 (IIAF…FPFL). Residues 912–979 (ALSGALQTKM…PYKMAIKKAN (68 aa)) are Cytoplasmic-facing. A helical transmembrane segment spans residues 980-1000 (VYGLCFGFSQCITFIANSASY). At 1001–1011 (RYGGYLISNEG) the chain is on the extracellular side. Residues 1012–1032 (LHFSYVFRVISAVVLSATALG) form a helical membrane-spanning segment. Residues 1033 to 1321 (RASSYTPSYA…KLVTTGSPIS (289 aa)) lie on the Cytoplasmic side of the membrane. Positions 1078–1316 (IDFVDCKFTY…KGAYYKLVTT (239 aa)) constitute an ABC transporter 2 domain. Residue 1113 to 1120 (GSSGCGKS) participates in ATP binding. S1214 and S1321 each carry phosphoserine.

The protein belongs to the ABC transporter superfamily. ABCB family. Multidrug resistance exporter (TC 3.A.1.201) subfamily. Interacts with HAX1. Interacts with the adapter protein complex 2 (AP-2) throught AP2A2 or AP2A1; this interaction regulates cell membrane expression of ABCB11 through its internalization in a clathrin-dependent manner and its subsequent degradation. Post-translationally, N-glycosylated. In terms of processing, ubiquitinated; short-chain ubiquitination regulates cell-Surface expression of ABCB11. As to expression, expressed predominantly, if not exclusively in the liver, where it was further localized to the canalicular microvilli and to subcanalicular vesicles of the hepatocytes by in situ.

It localises to the apical cell membrane. It is found in the recycling endosome membrane. Its subcellular location is the endosome. The protein resides in the cell membrane. It catalyses the reaction cholate(in) + ATP + H2O = cholate(out) + ADP + phosphate + H(+). The enzyme catalyses taurocholate(in) + ATP + H2O = taurocholate(out) + ADP + phosphate + H(+). The catalysed reaction is glycocholate(in) + ATP + H2O = glycocholate(out) + ADP + phosphate + H(+). It carries out the reaction glycochenodeoxycholate(in) + ATP + H2O = glycochenodeoxycholate(out) + ADP + phosphate + H(+). It catalyses the reaction taurochenodeoxycholate(in) + ATP + H2O = taurochenodeoxycholate(out) + ADP + phosphate + H(+). The enzyme catalyses glycoursodeoxycholate(in) + ATP + H2O = glycoursodeoxycholate(out) + ADP + phosphate + H(+). The catalysed reaction is tauroursodeoxycholate(in) + ATP + H2O = tauroursodeoxycholate(out) + ADP + phosphate + H(+). It carries out the reaction taurodeoxycholate(in) + ATP + H2O = taurodeoxycholate(out) + ADP + phosphate + H(+). It catalyses the reaction taurolithocholate 3-sulfate(in) + ATP + H2O = taurolithocholate 3-sulfate(out) + ADP + phosphate + H(+). The enzyme catalyses pravastatin(in) + ATP + H2O = pravastatin(out) + ADP + phosphate + H(+). Its activity is regulated as follows. The uptake of taurocholate is inhibited by taurolithocholate sulfate with an IC(50) of 9 uM. Pravastatin competitively inhibits the transport of taurocholic acid. Cyclosporin A, glibenclamide, rifampicin and troglitazonestrongly competitively inhibit the transport activity of taurocholate. The canalicular transport activity of taurocholate is strongly dependent on canalicular membrane cholesterol content. The uptake of taurocholate is increased by short- and medium-chain fatty acids. Cholesterol increases transport capacity of taurocholate without affecting the affinity for the substrate. Catalyzes the transport of the major hydrophobic bile salts, such as taurine and glycine-conjugated cholic acid across the canalicular membrane of hepatocytes in an ATP-dependent manner, therefore participates in hepatic bile acid homeostasis and consequently to lipid homeostasis through regulation of biliary lipid secretion in a bile salts dependent manner. Transports taurine-conjugated bile salts more rapidly than glycine-conjugated bile salts. Also transports non-bile acid compounds, such as pravastatin and fexofenadine in an ATP-dependent manner and may be involved in their biliary excretion. The sequence is that of Bile salt export pump from Oryctolagus cuniculus (Rabbit).